A 157-amino-acid polypeptide reads, in one-letter code: Endoribonuclease YbeY (157 aa).

Positions 122, 126, and 132 each coordinate Zn(2+).

It belongs to the endoribonuclease YbeY family. Requires Zn(2+) as cofactor.

Its subcellular location is the cytoplasm. Functionally, single strand-specific metallo-endoribonuclease involved in late-stage 70S ribosome quality control and in maturation of the 3' terminus of the 16S rRNA. This is Endoribonuclease YbeY from Lysinibacillus sphaericus (strain C3-41).